Consider the following 331-residue polypeptide: Ornithine carbamoyltransferase (331 aa).

Residues 55–58, glutamine 82, arginine 106, and 133–136 contribute to the carbamoyl phosphate site; these read STRT and HPTQ. L-ornithine-binding positions include asparagine 166, aspartate 230, and 234–235; that span reads SM. Residues 272-273 and arginine 317 contribute to the carbamoyl phosphate site; that span reads CL.

Belongs to the aspartate/ornithine carbamoyltransferase superfamily. OTCase family.

It is found in the cytoplasm. It carries out the reaction carbamoyl phosphate + L-ornithine = L-citrulline + phosphate + H(+). Its pathway is amino-acid biosynthesis; L-arginine biosynthesis; L-arginine from L-ornithine and carbamoyl phosphate: step 1/3. Its function is as follows. Reversibly catalyzes the transfer of the carbamoyl group from carbamoyl phosphate (CP) to the N(epsilon) atom of ornithine (ORN) to produce L-citrulline. This is Ornithine carbamoyltransferase (argF) from Neisseria meningitidis serogroup A / serotype 4A (strain DSM 15465 / Z2491).